Reading from the N-terminus, the 183-residue chain is Peptide deformylase (183 aa).

Positions 111 and 154 each coordinate Fe cation. Glu-155 is a catalytic residue. A Fe cation-binding site is contributed by His-158.

This sequence belongs to the polypeptide deformylase family. The cofactor is Fe(2+).

It catalyses the reaction N-terminal N-formyl-L-methionyl-[peptide] + H2O = N-terminal L-methionyl-[peptide] + formate. Functionally, removes the formyl group from the N-terminal Met of newly synthesized proteins. Requires at least a dipeptide for an efficient rate of reaction. N-terminal L-methionine is a prerequisite for activity but the enzyme has broad specificity at other positions. This is Peptide deformylase from Staphylococcus epidermidis (strain ATCC 35984 / DSM 28319 / BCRC 17069 / CCUG 31568 / BM 3577 / RP62A).